The chain runs to 253 residues: Ubiquinone/menaquinone biosynthesis C-methyltransferase UbiE (253 aa).

Residues threonine 76, aspartate 97, and 125-126 (NA) contribute to the S-adenosyl-L-methionine site.

The protein belongs to the class I-like SAM-binding methyltransferase superfamily. MenG/UbiE family.

The catalysed reaction is a 2-demethylmenaquinol + S-adenosyl-L-methionine = a menaquinol + S-adenosyl-L-homocysteine + H(+). It catalyses the reaction a 2-methoxy-6-(all-trans-polyprenyl)benzene-1,4-diol + S-adenosyl-L-methionine = a 5-methoxy-2-methyl-3-(all-trans-polyprenyl)benzene-1,4-diol + S-adenosyl-L-homocysteine + H(+). It functions in the pathway quinol/quinone metabolism; menaquinone biosynthesis; menaquinol from 1,4-dihydroxy-2-naphthoate: step 2/2. Its pathway is cofactor biosynthesis; ubiquinone biosynthesis. Methyltransferase required for the conversion of demethylmenaquinol (DMKH2) to menaquinol (MKH2) and the conversion of 2-polyprenyl-6-methoxy-1,4-benzoquinol (DDMQH2) to 2-polyprenyl-3-methyl-6-methoxy-1,4-benzoquinol (DMQH2). This Stenotrophomonas maltophilia (strain K279a) protein is Ubiquinone/menaquinone biosynthesis C-methyltransferase UbiE.